The chain runs to 350 residues: Ion-translocating oxidoreductase complex subunit D (350 aa).

Helical transmembrane passes span 37–57 (YFFGFGVLIQVMLAIVVALTA), 68–88 (AVLSTISDNSALLTAILIGVA), 89–109 (IPPIAPWWLVVIGTLFAIVLV), and 120–140 (IFNPAMAAYVMLLISFPVQMT). Threonine 185 bears the FMN phosphoryl threonine mark. 5 helical membrane passes run 212 to 232 (GYGVGWFWVNMAYLAGGLIML), 239 to 259 (WHISFAILGSLFVCSSFGYLL), 265 to 285 (VGPLLQLFSGATMIAAFFIAT), 291 to 311 (ATSVKGRLLFGTLIGVMVYVI), and 315 to 335 (GGYPDAFAFAVLLANLCAPFI).

Belongs to the NqrB/RnfD family. The complex is composed of six subunits: RnfA, RnfB, RnfC, RnfD, RnfE and RnfG. FMN is required as a cofactor.

It localises to the cell inner membrane. In terms of biological role, part of a membrane-bound complex that couples electron transfer with translocation of ions across the membrane. In Shewanella pealeana (strain ATCC 700345 / ANG-SQ1), this protein is Ion-translocating oxidoreductase complex subunit D.